The primary structure comprises 395 residues: MSARNILVINCGSSSIKFALVNEAQATFPLQGLAECIGSPEAVIHFESAAGKESVKVPNADHQAALAQILPRVEDAAGGHLDGIGHRVVHGGEKFFASTLLNDETLAGIEANIQLAPLHNPANLSGIHAAINLFPELPQVGVFDTAFHQTMPEHAYRYAVPDVLYKDHGVRRYGFHGTSHRYVSKRAAELAGVPVDNSSWLVAHLGNGCSTCAVVNGESRDTSMGLTPLEGLVMGTRSGDVDPSLHNFLHKTLGWDLAKIDNMLNKESGLKGLSGLSNDMRTLAEARQAGHPGAVLAFEVFCYRLAKSLAAMSCALPQLDGLVFTGGIGENSSAVRERTLEHLKLFGFKLDAEANARCTRGVAGEIQAQGSPRVMVVPTNEERQIALDTLALLDA.

Asparagine 10 contacts Mg(2+). Lysine 17 contributes to the ATP binding site. Arginine 87 contributes to the substrate binding site. The active-site Proton donor/acceptor is aspartate 144. Residues 204–208, 279–281, and 327–331 each bind ATP; these read HLGNG, DMR, and GIGEN. Glutamate 381 provides a ligand contact to Mg(2+).

The protein belongs to the acetokinase family. As to quaternary structure, homodimer. Mg(2+) is required as a cofactor. It depends on Mn(2+) as a cofactor.

The protein resides in the cytoplasm. The catalysed reaction is acetate + ATP = acetyl phosphate + ADP. It functions in the pathway metabolic intermediate biosynthesis; acetyl-CoA biosynthesis; acetyl-CoA from acetate: step 1/2. In terms of biological role, catalyzes the formation of acetyl phosphate from acetate and ATP. Can also catalyze the reverse reaction. The polypeptide is Acetate kinase (Stutzerimonas stutzeri (strain A1501) (Pseudomonas stutzeri)).